The chain runs to 273 residues: Shikimate dehydrogenase (NADP(+)) (273 aa).

Residues 15-17 (SKS) and Thr-62 each bind shikimate. The active-site Proton acceptor is the Lys-66. An NADP(+)-binding site is contributed by Asp-78. Shikimate is bound by residues Asn-87 and Asp-103. NADP(+)-binding positions include 127–131 (GAGGA), 150–155 (NRTYAR), and Met-214. Tyr-216 serves as a coordination point for shikimate. NADP(+) is bound at residue Gly-238.

It belongs to the shikimate dehydrogenase family. As to quaternary structure, homodimer.

It catalyses the reaction shikimate + NADP(+) = 3-dehydroshikimate + NADPH + H(+). It participates in metabolic intermediate biosynthesis; chorismate biosynthesis; chorismate from D-erythrose 4-phosphate and phosphoenolpyruvate: step 4/7. Functionally, involved in the biosynthesis of the chorismate, which leads to the biosynthesis of aromatic amino acids. Catalyzes the reversible NADPH linked reduction of 3-dehydroshikimate (DHSA) to yield shikimate (SA). In Yersinia enterocolitica serotype O:8 / biotype 1B (strain NCTC 13174 / 8081), this protein is Shikimate dehydrogenase (NADP(+)).